Consider the following 194-residue polypeptide: RNA polymerase II subunit A C-terminal domain phosphatase SSU72 like protein 2 (194 aa).

Belongs to the SSU72 phosphatase family.

It is found in the nucleus. It catalyses the reaction O-phospho-L-seryl-[protein] + H2O = L-seryl-[protein] + phosphate. The catalysed reaction is O-phospho-L-threonyl-[protein] + H2O = L-threonyl-[protein] + phosphate. In terms of biological role, protein phosphatase that catalyzes the dephosphorylation of the C-terminal domain of RNA polymerase II. Plays a role in RNA processing and termination. The polypeptide is RNA polymerase II subunit A C-terminal domain phosphatase SSU72 like protein 2 (Homo sapiens (Human)).